The primary structure comprises 199 residues: Recombination protein RecR (199 aa).

The segment at 57–72 adopts a C4-type zinc-finger fold; the sequence is CQSCRTFTEQSLCPIC. A Toprim domain is found at 81 to 176; the sequence is GVICVVETPA…IISRIAHGVP (96 aa).

This sequence belongs to the RecR family.

In terms of biological role, may play a role in DNA repair. It seems to be involved in an RecBC-independent recombinational process of DNA repair. It may act with RecF and RecO. This chain is Recombination protein RecR, found in Shewanella denitrificans (strain OS217 / ATCC BAA-1090 / DSM 15013).